A 77-amino-acid chain; its full sequence is Acyl carrier protein (77 aa).

The Carrier domain maps to 1-76; it reads MATFDDVKAV…DVVNYIDNLK (76 aa). Serine 36 is modified (O-(pantetheine 4'-phosphoryl)serine).

This sequence belongs to the acyl carrier protein (ACP) family. 4'-phosphopantetheine is transferred from CoA to a specific serine of apo-ACP by AcpS. This modification is essential for activity because fatty acids are bound in thioester linkage to the sulfhydryl of the prosthetic group.

It localises to the cytoplasm. Its pathway is lipid metabolism; fatty acid biosynthesis. Its function is as follows. Carrier of the growing fatty acid chain in fatty acid biosynthesis. This chain is Acyl carrier protein, found in Campylobacter jejuni subsp. doylei (strain ATCC BAA-1458 / RM4099 / 269.97).